We begin with the raw amino-acid sequence, 198 residues long: MKYPDFTLENKLSGVIAGVDEVGRGPLAGPVISAAVVFIDRNTIIDGINDSKKLTPQCRQVLYEKITSVAKFGIGMASVEEINSYNILQATKLSMKRALIDLDLELDYVLVDGNQPPEVKWQVKSIVNGDNLSTSIAAASIVAKVTRDRLMQELHNKHPEYNWYKNKGYGTKEHLNAIGLYGITEHHRKNFAPISRAL.

An RNase H type-2 domain is found at 14–198 (GVIAGVDEVG…KNFAPISRAL (185 aa)). 3 residues coordinate a divalent metal cation: Asp20, Glu21, and Asp112.

It belongs to the RNase HII family. Mn(2+) serves as cofactor. It depends on Mg(2+) as a cofactor.

The protein resides in the cytoplasm. It carries out the reaction Endonucleolytic cleavage to 5'-phosphomonoester.. Its function is as follows. Endonuclease that specifically degrades the RNA of RNA-DNA hybrids. The sequence is that of Ribonuclease HII from Wolbachia pipientis wMel.